The chain runs to 512 residues: Altronate oxidoreductase (512 aa).

26 to 37 (VLQFGEGNFLRG) serves as a coordination point for NAD(+).

Belongs to the mannitol dehydrogenase family. UxaB subfamily.

It carries out the reaction D-altronate + NAD(+) = keto-D-tagaturonate + NADH + H(+). The protein operates within carbohydrate metabolism; pentose and glucuronate interconversion. The protein is Altronate oxidoreductase of Halalkalibacterium halodurans (strain ATCC BAA-125 / DSM 18197 / FERM 7344 / JCM 9153 / C-125) (Bacillus halodurans).